The sequence spans 165 residues: Short form salivary protein D7R4 (165 aa).

Positions 1 to 21 (MIRQVITSYFLTVCLLALVQG) are cleaved as a signal peptide. 3 cysteine pairs are disulfide-bonded: cysteine 27–cysteine 59, cysteine 40–cysteine 165, and cysteine 98–cysteine 117. Noradrenaline contacts are provided by glutamate 28 and arginine 43. Glutamate 28 contacts serotonin. 4 residues coordinate serotonin: histidine 56, tyrosine 115, aspartate 132, and glutamate 135. The histamine site is built by tyrosine 115, aspartate 132, and glutamate 135. Tryptamine contacts are provided by tyrosine 115, aspartate 132, and glutamate 135. Noradrenaline-binding residues include aspartate 132 and glutamate 135.

The protein belongs to the PBP/GOBP family. In terms of tissue distribution, female saliva (at protein level). Female salivary gland. Not detected in female carcass without salivary glands. Not detected in male tissues.

Its subcellular location is the secreted. Modulates blood feeding of female mosquitoes on vertebrate species by binding and sequestering different mediators involved in the host response. Binds serotonin, noradrenaline, histamine and tryptamine. Inhibits histamine-, serotonin- and partially noradrenaline-induced smooth muscle contraction. Exhibits vasodilating activity. This Anopheles gambiae (African malaria mosquito) protein is Short form salivary protein D7R4.